The sequence spans 552 residues: Mothers against decapentaplegic homolog 4 (552 aa).

The mediates interaction with ZBTB7A stretch occupies residues Met-1–Tyr-322. Residues Ser-18–Asp-142 enclose the MH1 domain. Residue Lys-37 is modified to N6-acetyllysine. Positions Val-44–Ser-69 are required for interaction with TSC22D1. Cys-71 provides a ligand contact to Zn(2+). A Glycyl lysine isopeptide (Lys-Gly) (interchain with G-Cter in SUMO2) cross-link involves residue Lys-113. The Zn(2+) site is built by Cys-115, Cys-127, and His-132. 2 disordered regions span residues Gly-168–Thr-194 and Gly-236–Gln-256. Polar residues-rich tracts occupy residues Pro-170–Thr-194 and Gln-245–Gln-256. An SAD region spans residues Pro-275–Pro-320. The MH2 domain occupies Trp-323–Asp-552. An N6-acetyllysine mark is found at Lys-428 and Lys-507. Lys-519 is covalently cross-linked (Glycyl lysine isopeptide (Lys-Gly) (interchain with G-Cter in ubiquitin)).

The protein belongs to the dwarfin/SMAD family. As to quaternary structure, monomer; in the absence of TGF-beta activation. Heterotrimer; on TGF-beta activation. Heterotrimer composed of two molecules of a C-terminally phosphorylated R-SMAD molecule, SMAD2 or SMAD3, and one molecule of SMAD4 to form the transcriptional active SMAD2/SMAD3-SMAD4 complex. Found in a ternary complex composed of SMAD4, STK11/LKB1 and STK11IP. Found in a complex with SMAD1 and YY1. Identified in a complex that contains at least ZNF451, SMAD2, SMAD3 and SMAD4. Interacts with ATF2, COPS5, DACH1, MSG1, SKI, STK11/LKB1, STK11IP and TRIM33. Associates with ZNF423 or ZNF521 in response to BMP2 leading to activate transcription of BMP target genes. Interacts with USP9X. Interacts (via the MH1 and MH2 domains) with RBPMS. Interacts with WWTR1 (via coiled-coil domain). Interacts with CITED1 and CITED2. Interacts with PDPK1 (via PH domain). Interacts with VPS39; this interaction affects heterodimer formation with SMAD3, but not with SMAD2, and leads to inhibition of SMAD3-dependent transcription activation. Interactions with VPS39 and SMAD2 may be mutually exclusive. Interacts (via MH2 domain) with ZNF451 (via N-terminal zinc-finger domains). Interacts with ZC3H3. Interacts weakly with ZNF8. Interacts with NUP93 and IPO7; translocates SMAD4 to the nucleus through the NPC upon BMP7 stimulation resulting in activation of SMAD4 signaling. Interacts with CREB3L1, the interaction takes place upon TGFB1 induction and SMAD4 acts as a CREB3L1 coactivator to induce the expression of genes involved in the assembly of collagen extracellular matrix. Interacts with DLX1. Interacts with ZBTB7A; the interaction is direct and stimulated by TGFB1. Interacts with CREBBP; the recruitment of this transcriptional coactivator is negatively regulated by ZBTB7A. Interacts with EP300; the interaction with this transcriptional coactivator is negatively regulated by ZBTB7A. Interacts with HDAC1. Interacts (via MH2 domain) with ZMIZ1 (via SP-RING-type domain); in the TGF-beta signaling pathway increases the activity of the SMAD3/SMAD4 transcriptional complex. Interacts (via N-terminus) with TSC22D1. In terms of processing, phosphorylated by PDPK1. Monoubiquitinated on Lys-519 by E3 ubiquitin-protein ligase TRIM33. Monoubiquitination hampers its ability to form a stable complex with activated SMAD2/3 resulting in inhibition of TGF-beta/BMP signaling cascade. Deubiquitination by USP9X restores its competence to mediate TGF-beta signaling.

It localises to the cytoplasm. Its subcellular location is the nucleus. In muscle physiology, plays a central role in the balance between atrophy and hypertrophy. When recruited by MSTN, promotes atrophy response via phosphorylated SMAD2/4. MSTN decrease causes SMAD4 release and subsequent recruitment by the BMP pathway to promote hypertrophy via phosphorylated SMAD1/5/8. Acts synergistically with SMAD1 and YY1 in bone morphogenetic protein (BMP)-mediated cardiac-specific gene expression. Binds to SMAD binding elements (SBEs) (5'-GTCT/AGAC-3') within BMP response element (BMPRE) of cardiac activating regions. Common SMAD (co-SMAD) is the coactivator and mediator of signal transduction by TGF-beta (transforming growth factor). Component of the heterotrimeric SMAD2/SMAD3-SMAD4 complex that forms in the nucleus and is required for the TGF-mediated signaling. Promotes binding of the SMAD2/SMAD4/FAST-1 complex to DNA and provides an activation function required for SMAD1 or SMAD2 to stimulate transcription. Component of the multimeric SMAD3/SMAD4/JUN/FOS complex which forms at the AP1 promoter site; required for synergistic transcriptional activity in response to TGF-beta. May act as a tumor suppressor. Positively regulates PDPK1 kinase activity by stimulating its dissociation from the 14-3-3 protein YWHAQ which acts as a negative regulator. The polypeptide is Mothers against decapentaplegic homolog 4 (SMAD4) (Homo sapiens (Human)).